A 503-amino-acid chain; its full sequence is Probable Xaa-Pro aminopeptidase TSTA_094700 (503 aa).

Positions 277, 288, 428, and 467 each coordinate Mn(2+).

This sequence belongs to the peptidase M24B family. Mn(2+) is required as a cofactor.

The enzyme catalyses Release of any N-terminal amino acid, including proline, that is linked to proline, even from a dipeptide or tripeptide.. Its function is as follows. Catalyzes the removal of a penultimate prolyl residue from the N-termini of peptides. This is Probable Xaa-Pro aminopeptidase TSTA_094700 from Talaromyces stipitatus (strain ATCC 10500 / CBS 375.48 / QM 6759 / NRRL 1006) (Penicillium stipitatum).